Consider the following 179-residue polypeptide: Inner membrane-spanning protein YciB (179 aa).

The next 5 membrane-spanning stretches (helical) occupy residues 22 to 42, 50 to 70, 76 to 96, 121 to 141, and 149 to 169; these read IYAA…YSWV, MALI…FFHN, WKVT…QWVM, LAWA…AFWL, and FKVF…GVYI.

It belongs to the YciB family.

Its subcellular location is the cell inner membrane. Its function is as follows. Plays a role in cell envelope biogenesis, maintenance of cell envelope integrity and membrane homeostasis. This is Inner membrane-spanning protein YciB from Citrobacter koseri (strain ATCC BAA-895 / CDC 4225-83 / SGSC4696).